The primary structure comprises 186 residues: Ribosome-recycling factor (186 aa).

A disordered region spans residues 144–163; that stretch reads EKDGVIGQDESRAQSERVQK.

It belongs to the RRF family.

The protein resides in the cytoplasm. Its function is as follows. Responsible for the release of ribosomes from messenger RNA at the termination of protein biosynthesis. May increase the efficiency of translation by recycling ribosomes from one round of translation to another. This chain is Ribosome-recycling factor, found in Rhizobium johnstonii (strain DSM 114642 / LMG 32736 / 3841) (Rhizobium leguminosarum bv. viciae).